Reading from the N-terminus, the 132-residue chain is Small ribosomal subunit protein uS11 (132 aa).

The protein belongs to the universal ribosomal protein uS11 family. As to quaternary structure, part of the 30S ribosomal subunit. Interacts with proteins S7 and S18. Binds to IF-3.

In terms of biological role, located on the platform of the 30S subunit, it bridges several disparate RNA helices of the 16S rRNA. Forms part of the Shine-Dalgarno cleft in the 70S ribosome. The chain is Small ribosomal subunit protein uS11 from Clostridium kluyveri (strain NBRC 12016).